Reading from the N-terminus, the 252-residue chain is MQGAFLNNRIILQSYHIKKRLYSKRTSSLHSRFLQPTYRKNICQISKPIFQQDLSTNTNFISKLKSPFSNLKMSNLKQPLVWIDCEMTGLEVGKHVLMEVAAIITDGNLRPVEEKFDAVIKLDEKQLSEMNDWCIEQHGKSGLTERCRQSNLTVKDVENQLLAYIKKYIPKKREALIAGNSVHADVRFLSVEMPKIIEHLHYRIIDVSTIKELAKRWCPDIPAYDKKGDHRALSDILESIGELQHYRSYWLS.

One can recognise an Exonuclease domain in the interval 81–241 (VWIDCEMTGL…ALSDILESIG (161 aa)). Residue tyrosine 202 is part of the active site.

This sequence belongs to the oligoribonuclease family.

Its subcellular location is the cytoplasm. It is found in the nucleus. Functionally, 3'-to-5' exoribonuclease specific for small oligoribonucleotides. This Schizosaccharomyces pombe (strain 972 / ATCC 24843) (Fission yeast) protein is Probable oligoribonuclease (rex2).